A 434-amino-acid polypeptide reads, in one-letter code: MKKGAKRKGVSKAGRKAAVAETQNDEVIEETTKTTQEESQQHEEEVVDEVKENGEEEEAKGDQEEEEDAKPDSLEEDEENQEDEVKAEEVKEEVEKKPVARRGGKRKRATKKDTEIKDEKKPVPKAKKPRAAKVKEEPVYFEEKRSLEDLWKVAFPVGTEWDQLDALYEFNWDFQNLEEALEEGGKLYGKKVYVFGCTEPQLVPYKGANKIVHVPAVVVIESPFPPSDKIGITSVQREVEEIIPMKKMKMDWLPYIPIEKRDRQVDKMNSQIFTLGCTQRRSALRHMKEDQLKKFEYCLPYFYQPFKEDELEQSTEVQIMFPSEPPVVCEFDWEFDELQEFVDKLVEEEALPAEQADEFKEYVKEQVRAAKKANREAKDARKKAIEEMSEDTKQAFQKMKFYKFYPQPSPDTPDVSGVQSPFINRYYGKAHEVL.

Positions 1–8 (MKKGAKRK) match the Nuclear localization signal 1 motif. The segment covering 1–15 (MKKGAKRKGVSKAGR) has biased composition (basic residues). The segment at 1–131 (MKKGAKRKGV…PVPKAKKPRA (131 aa)) is disordered. Positions 30-53 (ETTKTTQEESQQHEEEVVDEVKEN) are enriched in basic and acidic residues. Residues 54 to 82 (GEEEEAKGDQEEEEDAKPDSLEEDEENQE) show a composition bias toward acidic residues. A compositionally biased stretch (basic and acidic residues) spans 83 to 98 (DEVKAEEVKEEVEKKP). A Nuclear localization signal 2 motif is present at residues 95 to 102 (EKKPVARR). Basic residues predominate over residues 99–110 (VARRGGKRKRAT). Over residues 111–122 (KKDTEIKDEKKP) the composition is skewed to basic and acidic residues. A coiled-coil region spans residues 363 to 394 (VKEQVRAAKKANREAKDARKKAIEEMSEDTKQ). Residues 370-377 (AKKANREA) carry the Nuclear localization signal 3 motif.

It is found in the nucleus. The protein localises to the nucleolus. Functionally, essential protein required for basal thermotolerance, especially during heat-induced chromocentre decondensation, thus regulating transcriptional gene silencing (TGS). The sequence is that of Protein HEAT INTOLERANT 4 from Arabidopsis thaliana (Mouse-ear cress).